The primary structure comprises 448 residues: Chromosomal replication initiator protein DnaA (448 aa).

A domain I, interacts with DnaA modulators region spans residues M1–E85. The interval E85 to L110 is domain II. The domain III, AAA+ region stretch occupies residues I111–S327. ATP is bound by residues G155, G157, K158, and T159. The domain IV, binds dsDNA stretch occupies residues S328–D448.

The protein belongs to the DnaA family. Oligomerizes as a right-handed, spiral filament on DNA at oriC.

The protein localises to the cytoplasm. Plays an essential role in the initiation and regulation of chromosomal replication. ATP-DnaA binds to the origin of replication (oriC) to initiate formation of the DNA replication initiation complex once per cell cycle. Binds the DnaA box (a 9 base pair repeat at the origin) and separates the double-stranded (ds)DNA. Forms a right-handed helical filament on oriC DNA; dsDNA binds to the exterior of the filament while single-stranded (ss)DNA is stabiized in the filament's interior. The ATP-DnaA-oriC complex binds and stabilizes one strand of the AT-rich DNA unwinding element (DUE), permitting loading of DNA polymerase. After initiation quickly degrades to an ADP-DnaA complex that is not apt for DNA replication. Binds acidic phospholipids. This Alkaliphilus metalliredigens (strain QYMF) protein is Chromosomal replication initiator protein DnaA.